The chain runs to 393 residues: Elongation factor Tu (393 aa).

Positions lysine 10 to valine 203 constitute a tr-type G domain. Positions glycine 19–threonine 26 are G1. Glycine 19 to threonine 26 is a binding site for GTP. Threonine 26 serves as a coordination point for Mg(2+). The segment at glycine 60–serine 64 is G2. The G3 stretch occupies residues aspartate 81–glycine 84. GTP is bound by residues aspartate 81–histidine 85 and asparagine 136–aspartate 139. Positions asparagine 136 to aspartate 139 are G4. The interval serine 173–leucine 175 is G5.

It belongs to the TRAFAC class translation factor GTPase superfamily. Classic translation factor GTPase family. EF-Tu/EF-1A subfamily. In terms of assembly, monomer.

The protein localises to the cytoplasm. It catalyses the reaction GTP + H2O = GDP + phosphate + H(+). Its function is as follows. GTP hydrolase that promotes the GTP-dependent binding of aminoacyl-tRNA to the A-site of ribosomes during protein biosynthesis. In Chlorobaculum tepidum (strain ATCC 49652 / DSM 12025 / NBRC 103806 / TLS) (Chlorobium tepidum), this protein is Elongation factor Tu.